We begin with the raw amino-acid sequence, 508 residues long: Steroid 17-alpha-hydroxylase/17,20 lyase (508 aa).

Cys442 is a binding site for heme.

The protein belongs to the cytochrome P450 family. It depends on heme as a cofactor.

The protein resides in the endoplasmic reticulum membrane. It localises to the microsome membrane. It catalyses the reaction a C21-steroid + reduced [NADPH--hemoprotein reductase] + O2 = a 17alpha-hydroxy-C21-steroid + oxidized [NADPH--hemoprotein reductase] + H2O + H(+). It carries out the reaction progesterone + reduced [NADPH--hemoprotein reductase] + O2 = 17alpha-hydroxyprogesterone + oxidized [NADPH--hemoprotein reductase] + H2O + H(+). The catalysed reaction is pregnenolone + reduced [NADPH--hemoprotein reductase] + O2 = 17alpha-hydroxypregnenolone + oxidized [NADPH--hemoprotein reductase] + H2O + H(+). The enzyme catalyses 17alpha-hydroxyprogesterone + reduced [NADPH--hemoprotein reductase] + O2 = androst-4-ene-3,17-dione + acetate + oxidized [NADPH--hemoprotein reductase] + H2O + 2 H(+). It catalyses the reaction 17alpha-hydroxyprogesterone + reduced [NADPH--hemoprotein reductase] + O2 = 16alpha,17alpha-dihydroxyprogesterone + oxidized [NADPH--hemoprotein reductase] + H2O + H(+). It carries out the reaction 16alpha,17alpha-dihydroxyprogesterone + reduced [NADPH--hemoprotein reductase] + O2 = 6beta,16alpha,17alpha-trihydroxyprogesterone + oxidized [NADPH--hemoprotein reductase] + H2O + H(+). The catalysed reaction is 17alpha-hydroxypregnenolone + reduced [NADPH--hemoprotein reductase] + O2 = 3beta-hydroxyandrost-5-en-17-one + acetate + oxidized [NADPH--hemoprotein reductase] + H2O + 2 H(+). The enzyme catalyses 16alpha,17alpha-dihydroxypregnenolone + reduced [NADPH--hemoprotein reductase] + O2 = 3beta,16alpha-dihydroxy-androst-5-en-17-one + acetate + oxidized [NADPH--hemoprotein reductase] + H2O + 2 H(+). It catalyses the reaction 3beta-hydroxyandrost-5-en-17-one + reduced [NADPH--hemoprotein reductase] + O2 = 3beta,16alpha-dihydroxy-androst-5-en-17-one + oxidized [NADPH--hemoprotein reductase] + H2O + H(+). It carries out the reaction androst-4-ene-3,17-dione + reduced [NADPH--hemoprotein reductase] + O2 = 16alpha-hydroxyandrost-4-ene-3,17-dione + oxidized [NADPH--hemoprotein reductase] + H2O + H(+). The protein operates within steroid hormone biosynthesis. Its pathway is steroid biosynthesis; glucocorticoid biosynthesis. Its activity is regulated as follows. Regulated predominantly by intracellular cAMP levels. The 17,20-lyase activity is stimulated by cytochrome b5, which acts as an allosteric effector increasing the Vmax of the lyase activity. In terms of biological role, a cytochrome P450 monooxygenase involved in corticoid and androgen biosynthesis. Catalyzes 17-alpha hydroxylation of C21 steroids, which is common for both pathways. A second oxidative step, required only for androgen synthesis, involves an acyl-carbon cleavage. The 17-alpha hydroxy intermediates, as part of adrenal glucocorticoids biosynthesis pathway, are precursors of cortisol. Hydroxylates steroid hormones, pregnenolone and progesterone to form 17-alpha hydroxy metabolites, followed by the cleavage of the C17-C20 bond to form C19 steroids, dehydroepiandrosterone (DHEA) and androstenedione. Has 16-alpha hydroxylase activity. Catalyzes 16-alpha hydroxylation of 17-alpha hydroxy pregnenolone, followed by the cleavage of the C17-C20 bond to form 16-alpha-hydroxy DHEA. Also 16-alpha hydroxylates androgens, relevant for estriol synthesis. Mechanistically, uses molecular oxygen inserting one oxygen atom into a substrate, and reducing the second into a water molecule, with two electrons provided by NADPH via cytochrome P450 reductase (CPR; NADPH-ferrihemoprotein reductase). In Cavia porcellus (Guinea pig), this protein is Steroid 17-alpha-hydroxylase/17,20 lyase (CYP17A1).